The sequence spans 845 residues: Ribosome-releasing factor 2, mitochondrial (845 aa).

The transit peptide at 1 to 28 (MIIATSLRSQTFCTWRAWRAVHSTAVRL) directs the protein to the mitochondrion. Positions 38-330 (DRTRNIGIIA…GVVKYLPSPL (293 aa)) constitute a tr-type G domain. Residues 47–54 (AHIDAGKT), 111–115 (DTPGH), and 165–168 (NKMD) each bind GTP.

It belongs to the TRAFAC class translation factor GTPase superfamily. Classic translation factor GTPase family. EF-G/EF-2 subfamily.

It localises to the mitochondrion. Mitochondrial GTPase that mediates the disassembly of ribosomes from messenger RNA at the termination of mitochondrial protein biosynthesis. Not involved in the GTP-dependent ribosomal translocation step during translation elongation. This Scheffersomyces stipitis (strain ATCC 58785 / CBS 6054 / NBRC 10063 / NRRL Y-11545) (Yeast) protein is Ribosome-releasing factor 2, mitochondrial.